We begin with the raw amino-acid sequence, 337 residues long: Glyceraldehyde-3-phosphate dehydrogenase 2 (337 aa).

NAD(+) is bound by residues 11-12, aspartate 35, arginine 79, and threonine 121; that span reads RI. D-glyceraldehyde 3-phosphate-binding positions include 153–155, threonine 184, arginine 199, 212–213, and arginine 235; these read SCT and TG. The Nucleophile role is filled by cysteine 154. An NAD(+)-binding site is contributed by asparagine 317.

It belongs to the glyceraldehyde-3-phosphate dehydrogenase family. As to quaternary structure, homotetramer.

It localises to the cytoplasm. The enzyme catalyses D-glyceraldehyde 3-phosphate + phosphate + NADP(+) = (2R)-3-phospho-glyceroyl phosphate + NADPH + H(+). It catalyses the reaction D-glyceraldehyde 3-phosphate + phosphate + NAD(+) = (2R)-3-phospho-glyceroyl phosphate + NADH + H(+). It participates in carbohydrate degradation; glycolysis; pyruvate from D-glyceraldehyde 3-phosphate: step 1/5. Functionally, involved in photosynthetic carbon assimilation. Catalyzes the NAD(P)-dependent oxidative phosphorylation of glyceraldehyde 3-phosphate (G3P) to 1,3-bisphosphoglycerate (BPG). The first reaction step involves the formation of a hemiacetal intermediate between G3P and a cysteine residue, and this hemiacetal intermediate is then oxidized to a thioester, with concomitant reduction of NAD to NADH. The reduced NADH is then exchanged with the second NAD, and the thioester is attacked by a nucleophilic inorganic phosphate to produce BPG. It can use both NADP and NAD. This Synechocystis sp. (strain ATCC 27184 / PCC 6803 / Kazusa) protein is Glyceraldehyde-3-phosphate dehydrogenase 2 (gap2).